A 217-amino-acid polypeptide reads, in one-letter code: Ribosomal RNA small subunit methyltransferase G (217 aa).

S-adenosyl-L-methionine contacts are provided by residues glycine 85, leucine 90, 135–136 (IE), and arginine 149.

The protein belongs to the methyltransferase superfamily. RNA methyltransferase RsmG family.

The protein localises to the cytoplasm. It catalyses the reaction guanosine(527) in 16S rRNA + S-adenosyl-L-methionine = N(7)-methylguanosine(527) in 16S rRNA + S-adenosyl-L-homocysteine. Functionally, specifically methylates the N7 position of guanine in position 527 of 16S rRNA. The protein is Ribosomal RNA small subunit methyltransferase G of Acidiphilium cryptum (strain JF-5).